A 280-amino-acid polypeptide reads, in one-letter code: Diaminopimelate epimerase (280 aa).

Substrate is bound by residues N15 and N66. The active-site Proton donor is the C75. Substrate contacts are provided by residues 76–77 (GN), N163, N196, and 214–215 (ER). C223 functions as the Proton acceptor in the catalytic mechanism. Position 224 to 225 (224 to 225 (GT)) interacts with substrate.

The protein belongs to the diaminopimelate epimerase family. Homodimer.

The protein localises to the cytoplasm. The catalysed reaction is (2S,6S)-2,6-diaminopimelate = meso-2,6-diaminopimelate. It functions in the pathway amino-acid biosynthesis; L-lysine biosynthesis via DAP pathway; DL-2,6-diaminopimelate from LL-2,6-diaminopimelate: step 1/1. Catalyzes the stereoinversion of LL-2,6-diaminopimelate (L,L-DAP) to meso-diaminopimelate (meso-DAP), a precursor of L-lysine and an essential component of the bacterial peptidoglycan. The chain is Diaminopimelate epimerase from Phocaeicola vulgatus (strain ATCC 8482 / DSM 1447 / JCM 5826 / CCUG 4940 / NBRC 14291 / NCTC 11154) (Bacteroides vulgatus).